Consider the following 105-residue polypeptide: Large ribosomal subunit protein eL36 (105 aa).

Position 62 is an N6-acetyllysine (Lys62).

Belongs to the eukaryotic ribosomal protein eL36 family. In terms of assembly, component of the large ribosomal subunit.

Its subcellular location is the cytoplasm. It is found in the cytosol. Functionally, component of the large ribosomal subunit. The ribosome is a large ribonucleoprotein complex responsible for the synthesis of proteins in the cell. The sequence is that of Large ribosomal subunit protein eL36 (RPL36) from Bos taurus (Bovine).